The primary structure comprises 195 residues: 5'-deoxynucleotidase PM0747 (195 aa).

Residues 18-19 and histidine 33 contribute to the substrate site; that span reads RW. Residues 30–142 enclose the HD domain; sequence LAEHSLQVAF…VKQADLICAY (113 aa). A divalent metal cation is bound by residues histidine 33, histidine 68, and aspartate 69. Residues aspartate 69, 77 to 80, and aspartate 137 each bind substrate; that span reads DLPT. Residue aspartate 137 participates in a divalent metal cation binding.

This sequence belongs to the 5DNU family. In terms of assembly, homodimer. A divalent metal cation serves as cofactor.

It localises to the cytoplasm. The enzyme catalyses a 2'-deoxyribonucleoside 5'-phosphate + H2O = a 2'-deoxyribonucleoside + phosphate. In terms of biological role, catalyzes the strictly specific dephosphorylation of 2'-deoxyribonucleoside 5'-monophosphates. This chain is 5'-deoxynucleotidase PM0747, found in Pasteurella multocida (strain Pm70).